The primary structure comprises 136 residues: Nucleoside diphosphate kinase (136 aa).

The ATP site is built by Lys-10, Phe-58, Arg-86, Thr-92, Arg-104, and Asn-114. Catalysis depends on His-117, which acts as the Pros-phosphohistidine intermediate.

Belongs to the NDK family. Homotetramer. Mg(2+) serves as cofactor.

It localises to the cytoplasm. It carries out the reaction a 2'-deoxyribonucleoside 5'-diphosphate + ATP = a 2'-deoxyribonucleoside 5'-triphosphate + ADP. The catalysed reaction is a ribonucleoside 5'-diphosphate + ATP = a ribonucleoside 5'-triphosphate + ADP. Major role in the synthesis of nucleoside triphosphates other than ATP. The ATP gamma phosphate is transferred to the NDP beta phosphate via a ping-pong mechanism, using a phosphorylated active-site intermediate. In Mycobacterium leprae (strain TN), this protein is Nucleoside diphosphate kinase.